A 277-amino-acid chain; its full sequence is Large ribosomal subunit protein mL46 (277 aa).

The residue at position 228 (K228) is an N6-acetyllysine.

Belongs to the mitochondrion-specific ribosomal protein mL46 family. Component of the mitochondrial ribosome large subunit (39S) which comprises a 16S rRNA and about 50 distinct proteins.

Its subcellular location is the mitochondrion. In Bos taurus (Bovine), this protein is Large ribosomal subunit protein mL46 (MRPL46).